We begin with the raw amino-acid sequence, 152 residues long: Psoriasis susceptibility 1 candidate gene 1 protein (152 aa).

Residues 1-31 (MTCTDQKSHSQRALGTQTPALQGPQLLNTDP) show a composition bias toward polar residues. The tract at residues 1 to 42 (MTCTDQKSHSQRALGTQTPALQGPQLLNTDPSSEETRPPHVN) is disordered.

In terms of tissue distribution, expressed in skin. Also found in heart, placenta, liver, skeletal muscle and pancreas.

This is Psoriasis susceptibility 1 candidate gene 1 protein (PSORS1C1) from Homo sapiens (Human).